Consider the following 94-residue polypeptide: Translation initiation factor 1A 2 (94 aa).

Positions 6-80 (GRRNLRMPSD…EKANIEWRYS (75 aa)) constitute an S1-like domain.

The protein belongs to the eIF-1A family.

Seems to be required for maximal rate of protein biosynthesis. Enhances ribosome dissociation into subunits and stabilizes the binding of the initiator Met-tRNA(I) to 40 S ribosomal subunits. The protein is Translation initiation factor 1A 2 of Haloquadratum walsbyi (strain DSM 16790 / HBSQ001).